The sequence spans 325 residues: Glucosyl-3-phosphoglycerate synthase (325 aa).

UDP-alpha-D-glucose contacts are provided by residues 37-41, serine 71, lysine 104, and 124-125; these read PSLNE and DS. Aspartate 126 contacts Mn(2+). 171-174 contributes to the (2R)-3-phosphoglycerate binding site; sequence GRVT. Residues 216–219 and 243–248 contribute to the UDP-alpha-D-glucose site; these read YGVE and RIHDNQ. Residue histidine 245 participates in Mn(2+) binding. Residue asparagine 247 coordinates (2R)-3-phosphoglycerate.

This sequence belongs to the glycosyltransferase 2 family. Homodimer in solution. Co(2+) serves as cofactor. Requires Mg(2+) as cofactor. Mn(2+) is required as a cofactor. The cofactor is Ni(2+). It depends on Zn(2+) as a cofactor.

It carries out the reaction an NDP-alpha-D-glucose + (2R)-3-phosphoglycerate = (2R)-2-O-(alpha-D-glucopyranosyl)-3-phospho-glycerate + a ribonucleoside 5'-diphosphate + H(+). It catalyses the reaction (2R)-3-phosphoglycerate + UDP-alpha-D-glucose = (2R)-2-O-(alpha-D-glucopyranosyl)-3-phospho-glycerate + UDP + H(+). The enzyme catalyses ADP-alpha-D-glucose + (2R)-3-phosphoglycerate = (2R)-2-O-(alpha-D-glucopyranosyl)-3-phospho-glycerate + ADP + H(+). Inhibited by ADP and EDTA. Involved in the biosynthesis of the compatible solute mannosylglucosylglycerate through a phosphorylating pathway. Catalyzes the transfer of the glucose moiety from a nuleotide sugar such as UDP-alpha-D-glucose to the position 2 of 3-phospho-D-glycerate (3-PGA) to form glucosyl-3-phosphoglycerate (GPG). UDP-glucose is the preferred substrate, but it can be partially replaced by ADP-glucose. The protein is Glucosyl-3-phosphoglycerate synthase of Petrotoga mobilis (strain DSM 10674 / SJ95).